Consider the following 300-residue polypeptide: B1 kinase (300 aa).

The 267-residue stretch at 16–282 folds into the Protein kinase domain; it reads WVVGPLIGKG…ITMVNSLTYF (267 aa). ATP-binding positions include 22–30 and Lys45; that span reads IGKGGFGSI. Asn147 functions as the Proton acceptor in the catalytic mechanism.

The protein belongs to the protein kinase superfamily. Ser/Thr protein kinase family. Poxviruses subfamily. In terms of assembly, interacts with host JIP1; this interaction increases the amount of MAPK bound to JIP1 and subsequently increases the activity of transcription factors, such as JUN, that respond to these complexes. Interacts with protein OPG198; this interaction inhibits the repressive activity of OPG198 pseudokinase on viral replication factory formation. Mg(2+) is required as a cofactor. Autophosphorylated.

It localises to the virion. Its subcellular location is the host cytoplasm. The catalysed reaction is L-seryl-[protein] + ATP = O-phospho-L-seryl-[protein] + ADP + H(+). The enzyme catalyses L-threonyl-[protein] + ATP = O-phospho-L-threonyl-[protein] + ADP + H(+). Essential serine/threonine-protein kinase that plays different role in the viral life cycle. Phosphorylates the host small ribosomal protein RACK1 thereby customizing the ribosomes to a state optimal for viral mRNAs (which contain poly-A leaders) but not for host mRNAs. Facilitates viral DNA replication by inhibiting host BANF1, a cellular host defense responsive to foreign DNA. Phosphorylates host BANF1 on serine and threonine residues; this leads to BANF1 relocalization to the cytoplasm, loss of dimerization and impaired DNA binding activity. Indeed, BANF1 activity depends on its DNA-binding property which is blocked by VPK1-mediated phosphorylation. Required for viral intermediate genes expression, probably by inhibiting host BANF1. Modulates cellular responses via host JUN by two different mechanisms, either by direct phosphorylation or by modulation of upstream JIP1-MAPK complexes. Seems to participate in the accumulation/processing of late proteins and thus in virion maturation. In addition, inhibits B12 repressive activity on viral DNA replication via a phosphorylation-dependent mechanism. This chain is B1 kinase (OPG187), found in Homo sapiens (Human).